Reading from the N-terminus, the 426-residue chain is Tyrosine-protein phosphatase non-receptor type 20 (426 aa).

The span at 1-10 (MSSPRKVRGK) shows a compositional bias: basic residues. Positions 1-58 (MSSPRKVRGKTGRDNDEEEGNSGNLNLRNSLPSSSQKMTPTKPIFGNKMNSENVKPSH) are disordered. Residues 21–35 (NSGNLNLRNSLPSSS) are compositionally biased toward low complexity. S76 bears the Phosphoserine mark. Polar residues predominate over residues 95–117 (NSMDSETAGPSKTVSPVLSGSSR). Residues 95 to 124 (NSMDSETAGPSKTVSPVLSGSSRLSKDTET) are disordered. At S127 the chain carries Phosphoserine. The Tyrosine-protein phosphatase domain maps to 165–418 (IIREFLELEQ…QFCYEIVLEV (254 aa)). Substrate contacts are provided by residues D329, 359–365 (CSAGVGR), and Q403. The active-site Phosphocysteine intermediate is C359.

The protein belongs to the protein-tyrosine phosphatase family. Non-receptor class subfamily. As to expression, testis-specific. Specifically expressed in testicular germ cells that undergo meiosis (at protein level).

It is found in the nucleus. The protein localises to the cytoplasm. Its subcellular location is the cytoskeleton. The protein resides in the microtubule organizing center. It localises to the centrosome. It catalyses the reaction O-phospho-L-tyrosyl-[protein] + H2O = L-tyrosyl-[protein] + phosphate. Functionally, tyrosine-protein phosphatase targeted to sites of actin polymerization in response of varied extracellular stimuli. Has tyrosine phosphatase activity towards various tyrosyl phosphorylated substrates. The sequence is that of Tyrosine-protein phosphatase non-receptor type 20 (Ptpn20) from Mus musculus (Mouse).